A 1079-amino-acid chain; its full sequence is MFYKTFGFLFIYLIILISGTLSQKEIDSSNEQPVIEVFLVPHSHCDVGWLKTVEQYYTENVTLILNNVIETLTKDKSKKFNWAEIIYFERWWNDQNETLQNQVKQLISNKQFYFVGGGWTQNDEAITDYQAVINQMTLGHQFLFNQFGIKPEIGWQIDPFGPSTLTPTLFKLMGFKYHVINRIDERIKYIFNATEMNIPESGIMTIEREFEFLWYPSSNNPNISIFTHVLDHHYESPSLTIVDYEIPNLTYTSGFDFEGNPKINPPITILNLRFRADLLVKIIKERIDLFRHNNLLLPFGGDFRFQDSKIEFNNMDKLIKFINSNQKTYGVNIKYSTVDEYFEKVIQDTNINWKEDTTTTTTTTIPIGGDEFPKLSNLDYFDYTKCDYNDYQKYKTCSLYYSGFFSSYSELKQISRQSDSLLRIGEFLYSFANLISNNNNNDDDDDDDNDFNIQLKEISNILVQHRNVSGILTHHDAITGTAKTKVRDDYLLMLNQVQSNTMNNVIPNIVGYLLSNKSIQNFDYSCNNTIIMNSPQIGDIFSISFTNSLGWDRSEYIQIQLPPSTIVTVYNYNLISIQSQIVQRFDKDNQTFLYFNVETPSLGISTYFIIITSTNDDNVDDDVDKVFGDDELLIYLLKNGILSKPILSEISEISELSSSSSSSSSSSSSQITIGNSKFNLNFNYLNENYNLLTLTSFDDLIENEYSIPITQNYIEYISGNDNSYIFKPSGLPVNLKPESPKFYKVTGSLVQMITILYTNNCSQTYIVYNSTTTTTTTTTTTTTTNNDDSPPLELINDEQYFEIDNIVAAGWNKEIGSQFSSESINNDKTFYTSNGLELIERNYKSLFNDTTEFNMIAGNYYPVINTIQILDNKSKKQLTILTKQSFGASSQNNGELNLLFIRRSTDQFVTLNETMNDISNPLIKIKVLFGNSNSIENIRTPHSLLLENPLLPIYSIVSDITIDKWISIYNTVFKPFKTSLPYNLHLLTFTKQQQQQQQDFNEDNPLDYFIRFLNIYEISQSESFSQPIEFKLTNYFNNFNITNIRESSLTFNSIINNNTNSIILNPLNLISLIITISKN.

Residues 1-22 (MFYKTFGFLFIYLIILISGTLS) form the signal peptide. 2 residues coordinate Zn(2+): His-44 and Asp-46. Residues Asn-60 and Asn-96 are each glycosylated (N-linked (GlcNAc...) asparagine). Asp-158 provides a ligand contact to Zn(2+). The active-site Nucleophile is the Asp-158. Residues Asn-192, Asn-222, Asn-248, and Asn-467 are each glycosylated (N-linked (GlcNAc...) asparagine). His-475 is a binding site for Zn(2+). 10 N-linked (GlcNAc...) asparagine glycosylation sites follow: Asn-516, Asn-527, Asn-589, Asn-760, Asn-769, Asn-848, Asn-872, Asn-912, Asn-1040, and Asn-1057.

It belongs to the glycosyl hydrolase 38 family. The cofactor is Zn(2+).

The protein localises to the secreted. It carries out the reaction Hydrolysis of terminal, non-reducing alpha-D-mannose residues in alpha-D-mannosides.. The protein is Alpha-mannosidase C (manC) of Dictyostelium discoideum (Social amoeba).